The chain runs to 689 residues: Histone-lysine N-methyltransferase MEDEA (689 aa).

3 disordered regions span residues 1-20 (MEKE…LNQI), 51-73 (HQSF…KSLL), and 169-188 (ELSS…EIKK). An interaction with FIE region spans residues 1–109 (MEKENHEDDG…DEDQDYALEE (109 aa)). A compositionally biased stretch (acidic residues) spans 171–184 (SSEEDEEDEEEDEE). The region spanning 339-389 (NNTMWTPVEKDLYLKGIEIFGRNSCDVALNILRGLKTCLEIYNYMREQDQC) is the SANT domain. Residues 428–532 (RYPPALKKTT…TLGETPVQIQ (105 aa)) enclose the CXC domain. In terms of domain architecture, SET spans 544–659 (KKILIGKSDV…EGEELFFDYC (116 aa)). Residues 666–689 (DWSRGREPRKTGASKRSKEARPAR) are disordered.

It belongs to the class V-like SAM-binding methyltransferase superfamily. Histone-lysine methyltransferase family. EZ subfamily. In terms of assembly, interacts directly with FIE via its N-terminal domain. These two proteins are probably indirectly associated with FIS2. In plants, PcG complexes are probably composed of a member of the EZ family (CLF or MEA), FIE, and a member of the VEFS family (FIS2, VRN2 or EMF2). Interacts with TAF13. Expressed in unpollinated siliques that contain maturing gametophytes. Not expressed at early stages of floral development during early megagametogenesis.

Its subcellular location is the nucleus. It carries out the reaction L-lysyl(27)-[histone H3] + 3 S-adenosyl-L-methionine = N(6),N(6),N(6)-trimethyl-L-lysyl(27)-[histone H3] + 3 S-adenosyl-L-homocysteine + 3 H(+). Polycomb group (PcG) protein. Catalytic subunit of some PcG multiprotein complex, which methylates 'Lys-27' of histone H3, leading to transcriptional repression of the affected target genes. Required to prevent the proliferation of the central cell of the female gametophyte by repressing target genes before fertilization. After fertilization, it probably also regulates the embryo and endosperm proliferation and anteroposterior organization during seed development. PcG proteins act by forming multiprotein complexes, which are required to maintain the transcriptionally repressive state of homeotic genes throughout development. PcG proteins are not required to initiate repression, but to maintain it during later stages of development. Interacts with the promoter and repress the transcription of genes such as PHE1 and PHE2, that are paternally active and maternally silenced genes. The sequence is that of Histone-lysine N-methyltransferase MEDEA (MEA) from Arabidopsis thaliana (Mouse-ear cress).